Reading from the N-terminus, the 673-residue chain is UvrABC system protein B (673 aa).

Positions 26 to 183 constitute a Helicase ATP-binding domain; sequence EGLEDGLAHQ…RRLAELQYTR (158 aa). Position 39–46 (39–46) interacts with ATP; that stretch reads GVTGSGKT. Residues 92-115 carry the Beta-hairpin motif; it reads YYDYYQPEAYVPSSDTFIEKDASV. Positions 431–597 constitute a Helicase C-terminal domain; that stretch reads QVDDLLSEIR…GLNKKVVDIL (167 aa). The tract at residues 608-627 is disordered; the sequence is AKGRGKSRPIVEPDNVPMDM. The UVR domain maps to 633–668; it reads QQKIHELEGLMMQHAQNLEFEEAAQIRDQLHQLREL.

This sequence belongs to the UvrB family. In terms of assembly, forms a heterotetramer with UvrA during the search for lesions. Interacts with UvrC in an incision complex.

The protein localises to the cytoplasm. The UvrABC repair system catalyzes the recognition and processing of DNA lesions. A damage recognition complex composed of 2 UvrA and 2 UvrB subunits scans DNA for abnormalities. Upon binding of the UvrA(2)B(2) complex to a putative damaged site, the DNA wraps around one UvrB monomer. DNA wrap is dependent on ATP binding by UvrB and probably causes local melting of the DNA helix, facilitating insertion of UvrB beta-hairpin between the DNA strands. Then UvrB probes one DNA strand for the presence of a lesion. If a lesion is found the UvrA subunits dissociate and the UvrB-DNA preincision complex is formed. This complex is subsequently bound by UvrC and the second UvrB is released. If no lesion is found, the DNA wraps around the other UvrB subunit that will check the other stand for damage. The chain is UvrABC system protein B from Escherichia fergusonii (strain ATCC 35469 / DSM 13698 / CCUG 18766 / IAM 14443 / JCM 21226 / LMG 7866 / NBRC 102419 / NCTC 12128 / CDC 0568-73).